We begin with the raw amino-acid sequence, 101 residues long: RNA-binding protein Hfq (101 aa).

The 60-residue stretch at 9-68 folds into the Sm domain; it reads DPYLNALRRERIPVSIYLVNGIKLQGQIESFDQFIILLKNTVSQMVYKHAISTVVPARSI. The interval 68 to 91 is disordered; it reads ISHNNNGSSQAQAPQQAVQTTQPV. Low complexity predominate over residues 77–91; that stretch reads QAQAPQQAVQTTQPV.

This sequence belongs to the Hfq family. Homohexamer.

RNA chaperone that binds small regulatory RNA (sRNAs) and mRNAs to facilitate mRNA translational regulation in response to envelope stress, environmental stress and changes in metabolite concentrations. Also binds with high specificity to tRNAs. In Haemophilus ducreyi (strain 35000HP / ATCC 700724), this protein is RNA-binding protein Hfq.